Consider the following 151-residue polypeptide: Small ribosomal subunit protein uS15 (151 aa).

This sequence belongs to the universal ribosomal protein uS15 family.

This Wuchereria bancrofti protein is Small ribosomal subunit protein uS15 (RPS13).